Reading from the N-terminus, the 448-residue chain is Methylenetetrahydrofolate--tRNA-(uracil-5-)-methyltransferase TrmFO (448 aa).

10-15 (GAGLAG) contributes to the FAD binding site.

The protein belongs to the MnmG family. TrmFO subfamily. It depends on FAD as a cofactor.

The protein localises to the cytoplasm. The enzyme catalyses uridine(54) in tRNA + (6R)-5,10-methylene-5,6,7,8-tetrahydrofolate + NADH + H(+) = 5-methyluridine(54) in tRNA + (6S)-5,6,7,8-tetrahydrofolate + NAD(+). The catalysed reaction is uridine(54) in tRNA + (6R)-5,10-methylene-5,6,7,8-tetrahydrofolate + NADPH + H(+) = 5-methyluridine(54) in tRNA + (6S)-5,6,7,8-tetrahydrofolate + NADP(+). Functionally, catalyzes the folate-dependent formation of 5-methyl-uridine at position 54 (M-5-U54) in all tRNAs. This is Methylenetetrahydrofolate--tRNA-(uracil-5-)-methyltransferase TrmFO from Lactococcus lactis subsp. cremoris (strain MG1363).